We begin with the raw amino-acid sequence, 91 residues long: MVKLRLKRCGRKKRAVYRIVAIDVRSRREGRDLRKVGLYDPINNKTHLNVPAILYFIERGAQPTRTVNDLLKKAGVLKDTGIPVVGTLVSK.

Belongs to the bacterial ribosomal protein bS16 family.

It localises to the plastid. Its subcellular location is the chloroplast. This Pelargonium hortorum (Common geranium) protein is Small ribosomal subunit protein bS16c.